Here is an 80-residue protein sequence, read N- to C-terminus: U4-theraphotoxin-Spl1a (80 aa).

Residues 1-21 form the signal peptide; it reads MKASLFAVIFGLVVLCACSFA. The propeptide occupies 22–50; it reads EDQFASPNELLKSMFVESTHELTPEVEGR. 3 cysteine pairs are disulfide-bonded: Cys52–Cys66, Cys59–Cys71, and Cys65–Cys75. Position 79 is a leucine amide (Leu79).

It belongs to the neurotoxin 30 (phrixotoxin) family. As to expression, expressed by the venom gland.

It is found in the secreted. In terms of biological role, probable ion channel inhibitor. Shows insecticidal activity when injected into mealworms. The sequence is that of U4-theraphotoxin-Spl1a from Selenotypus plumipes (Australian featherleg tarantula).